We begin with the raw amino-acid sequence, 1318 residues long: Serine/threonine-protein kinase ppk18 (1318 aa).

The segment at 431–485 (PSVSPEEVHDISQFNHRNDPPITAASVDSSNSFSVHRSSTNHSSTNSGSPNLSRR) is disordered. Residues 462–479 (SFSVHRSSTNHSSTNSGS) show a composition bias toward low complexity. A Protein kinase domain is found at 566-934 (YEIIKPISKG…INEIKEHPFF (369 aa)). Residues 572-580 (ISKGTFGTV) and Lys595 contribute to the ATP site. Asp690 acts as the Proton acceptor in catalysis. Residues 935–1044 (NGINWDDIFS…KNLSVLERAN (110 aa)) form the AGC-kinase C-terminal domain. 3 disordered regions span residues 968-1022 (GAAE…FSEA), 1058-1078 (KLHI…DMPS), and 1091-1127 (SLMT…GPKS). Over residues 972–1000 (SNMSSSVNSGEEVSKDNNVSQERGSQFLR) the composition is skewed to polar residues. A compositionally biased stretch (polar residues) spans 1091–1115 (SLMTNQGSNFSSTDSTPRKSINSSD). Positions 1116–1127 (VESRSKTDGPKS) are enriched in basic and acidic residues. The 117-residue stretch at 1200 to 1316 (KALICVSKLN…LLRGYIARLC (117 aa)) folds into the Response regulatory domain.

This sequence belongs to the protein kinase superfamily. Ser/Thr protein kinase family.

It localises to the cytoplasm. The catalysed reaction is L-seryl-[protein] + ATP = O-phospho-L-seryl-[protein] + ADP + H(+). The enzyme catalyses L-threonyl-[protein] + ATP = O-phospho-L-threonyl-[protein] + ADP + H(+). This Schizosaccharomyces pombe (strain 972 / ATCC 24843) (Fission yeast) protein is Serine/threonine-protein kinase ppk18 (ppk18).